The chain runs to 199 residues: Nucleoid occlusion factor SlmA (199 aa).

Residues 10 to 71 (RNRREEILQA…SLIEFIEDSL (62 aa)) form the HTH tetR-type domain. Residues 34–53 (TTAKLAANVGVSEAALYRHF) constitute a DNA-binding region (H-T-H motif). Residues 120-140 (NRLQGRINQLFERIEVQIRQV) are a coiled coil.

It belongs to the nucleoid occlusion factor SlmA family. As to quaternary structure, homodimer. Interacts with FtsZ.

It localises to the cytoplasm. Its subcellular location is the nucleoid. Its function is as follows. Required for nucleoid occlusion (NO) phenomenon, which prevents Z-ring formation and cell division over the nucleoid. Acts as a DNA-associated cell division inhibitor that binds simultaneously chromosomal DNA and FtsZ, and disrupts the assembly of FtsZ polymers. SlmA-DNA-binding sequences (SBS) are dispersed on non-Ter regions of the chromosome, preventing FtsZ polymerization at these regions. The chain is Nucleoid occlusion factor SlmA from Photorhabdus laumondii subsp. laumondii (strain DSM 15139 / CIP 105565 / TT01) (Photorhabdus luminescens subsp. laumondii).